The sequence spans 383 residues: 4-hydroxy-3-methylbut-2-en-1-yl diphosphate synthase (flavodoxin) (383 aa).

[4Fe-4S] cluster-binding residues include Cys-277, Cys-280, Cys-312, and Glu-319.

Belongs to the IspG family. [4Fe-4S] cluster is required as a cofactor.

The enzyme catalyses (2E)-4-hydroxy-3-methylbut-2-enyl diphosphate + oxidized [flavodoxin] + H2O + 2 H(+) = 2-C-methyl-D-erythritol 2,4-cyclic diphosphate + reduced [flavodoxin]. It functions in the pathway isoprenoid biosynthesis; isopentenyl diphosphate biosynthesis via DXP pathway; isopentenyl diphosphate from 1-deoxy-D-xylulose 5-phosphate: step 5/6. Functionally, converts 2C-methyl-D-erythritol 2,4-cyclodiphosphate (ME-2,4cPP) into 1-hydroxy-2-methyl-2-(E)-butenyl 4-diphosphate. This chain is 4-hydroxy-3-methylbut-2-en-1-yl diphosphate synthase (flavodoxin), found in Caulobacter vibrioides (strain ATCC 19089 / CIP 103742 / CB 15) (Caulobacter crescentus).